The chain runs to 410 residues: E3 SUMO-protein ligase EGR2 (410 aa).

Low complexity predominate over residues 68-83 (PPASTTASSSVTSASP). Disordered stretches follow at residues 68–95 (PPAS…GVCT), 101–120 (PELD…SGCT), and 127–151 (PSAF…SYPS). Residues 104 to 107 (DHLY) carry the HCFC1-binding-motif (HBM) motif. Over residues 127–143 (PSAFLSPPTTSTSSLAY) the composition is skewed to low complexity. An N6-acetyllysine modification is found at lysine 188. Residues 217 to 286 (PSAGVTGPGA…PYPCPAEGCD (70 aa)) form a disordered region. Residues 222-231 (TGPGASGGSE) are compositionally biased toward gly residues. A compositionally biased stretch (polar residues) spans 237–248 (GSGSAAVTTSPY). 3 consecutive C2H2-type zinc fingers follow at residues 278–302 (YPCP…IRIH), 308–330 (FQCR…IRTH), and 336–358 (FACD…TKIH). Positions 349–410 (DERKRHTKIH…LACTSRTRTP (62 aa)) are disordered. Positions 353 to 363 (RHTKIHLRQKE) are enriched in basic residues. Positions 367 to 380 (SAPSSSASAQPSAS) are enriched in low complexity.

It belongs to the EGR C2H2-type zinc-finger protein family. As to quaternary structure, interacts with HCFC1. Interacts with WWP2. Interacts with UBC9. Interacts with CITED1. Interacts (via phosphorylated form) with SFN. In terms of processing, ubiquitinated by WWP2 leading to proteasomal degradation. Acetylated. May be deacetylated by HDAC6, HDAC10 or SIRT1.

The protein localises to the nucleus. The protein operates within protein modification; protein sumoylation. Functionally, sequence-specific DNA-binding transcription factor. Plays a role in hindbrain segmentation by regulating the expression of a subset of homeobox containing genes and in Schwann cell myelination by regulating the expression of genes involved in the formation and maintenance of myelin. Binds to two EGR2-consensus sites EGR2A (5'-CTGTAGGAG-3') and EGR2B (5'-ATGTAGGTG-3') in the HOXB3 enhancer and promotes HOXB3 transcriptional activation. Binds to specific DNA sites located in the promoter region of HOXA4, HOXB2 and ERBB2. Regulates hindbrain segmentation by controlling the expression of Hox genes, such as HOXA4, HOXB3 and HOXB2, and thereby specifying odd and even rhombomeres. Promotes the expression of HOXB3 in the rhombomere r5 in the hindbrain. Regulates myelination in the peripheral nervous system after birth, possibly by regulating the expression of myelin proteins, such as MPZ, and by promoting the differentiation of Schwann cells. Involved in the development of the jaw openener musculature, probably by playing a role in its innervation through trigeminal motor neurons. May play a role in adipogenesis, possibly by regulating the expression of CEBPB. In terms of biological role, E3 SUMO-protein ligase helping SUMO1 conjugation to its coregulators NAB1 and NAB2, whose sumoylation down-regulates EGR2 transcriptional activity. This chain is E3 SUMO-protein ligase EGR2 (EGR2), found in Cricetulus griseus (Chinese hamster).